The following is a 215-amino-acid chain: Nucleoside triphosphate pyrophosphatase (215 aa).

Asp77 acts as the Proton acceptor in catalysis.

The protein belongs to the Maf family. The cofactor is a divalent metal cation.

Its subcellular location is the cytoplasm. It carries out the reaction a ribonucleoside 5'-triphosphate + H2O = a ribonucleoside 5'-phosphate + diphosphate + H(+). It catalyses the reaction a 2'-deoxyribonucleoside 5'-triphosphate + H2O = a 2'-deoxyribonucleoside 5'-phosphate + diphosphate + H(+). Its function is as follows. Nucleoside triphosphate pyrophosphatase. May have a dual role in cell division arrest and in preventing the incorporation of modified nucleotides into cellular nucleic acids. This chain is Nucleoside triphosphate pyrophosphatase, found in Rickettsia peacockii (strain Rustic).